The primary structure comprises 265 residues: Phosphate import ATP-binding protein PstB (265 aa).

The ABC transporter domain occupies 18 to 260; the sequence is MECRDCHVYY…PEDPRTESYI (243 aa). Residue 50 to 57 participates in ATP binding; that stretch reads GPSGCGKS.

This sequence belongs to the ABC transporter superfamily. Phosphate importer (TC 3.A.1.7) family. In terms of assembly, the complex is composed of two ATP-binding proteins (PstB), two transmembrane proteins (PstC and PstA) and a solute-binding protein (PstS).

The protein resides in the cell inner membrane. It carries out the reaction phosphate(out) + ATP + H2O = ADP + 2 phosphate(in) + H(+). Functionally, part of the ABC transporter complex PstSACB involved in phosphate import. Responsible for energy coupling to the transport system. The chain is Phosphate import ATP-binding protein PstB from Ruegeria pomeroyi (strain ATCC 700808 / DSM 15171 / DSS-3) (Silicibacter pomeroyi).